The primary structure comprises 444 residues: MSANHMTPDEIVAELDKFIIGQNRAKRAVAVALRNRWRRQQVAEPLRHEIHPKNILMIGPTGVGKTEIARRLAKLANAPFIKIEATKFTEVGYVGRDVDTIIRDLTEYSIKQTRELEMRRVRSHAEDAAEDRILDALVPPPRGASGEPERGEDNSARQTFRKRLREGKIDDLEIEIEIAQPMPQMDVMTPPGMEEMAEQLRGMFAGLARDKKKSKKIKVREAFKLIVEEEAAKRVNEDDLRAAAITNVEQNGIVFLDEIDKIAARQETGGADVSRQGVQRDLLPLVEGTTVNTRYGMVRTDHILFIASGAFHLARPSDLIPELQGRFPIRVELDSLSAEDFVSILSETDASLIKQYTALLGTEDVKLEFTDDGIRRLAELAFSVNERTENIGARRLYTVMEKLLEELSFDASANSGEVITIDAAYVDLQLAETAGSQDLARYVL.

Residues isoleucine 20 and 62 to 67 each bind ATP; that span reads GVGKTE. Residues 130 to 158 are disordered; the sequence is EDRILDALVPPPRGASGEPERGEDNSARQ. Aspartate 257, glutamate 322, and arginine 394 together coordinate ATP.

It belongs to the ClpX chaperone family. HslU subfamily. As to quaternary structure, a double ring-shaped homohexamer of HslV is capped on each side by a ring-shaped HslU homohexamer. The assembly of the HslU/HslV complex is dependent on binding of ATP.

It localises to the cytoplasm. Functionally, ATPase subunit of a proteasome-like degradation complex; this subunit has chaperone activity. The binding of ATP and its subsequent hydrolysis by HslU are essential for unfolding of protein substrates subsequently hydrolyzed by HslV. HslU recognizes the N-terminal part of its protein substrates and unfolds these before they are guided to HslV for hydrolysis. The protein is ATP-dependent protease ATPase subunit HslU of Bordetella parapertussis (strain 12822 / ATCC BAA-587 / NCTC 13253).